The sequence spans 1115 residues: DNA-directed RNA polymerase subunit beta (1115 aa).

A disordered region spans residues 1084–1115 (HEAGEGEDDEYFEEDEEAVDDEPMTFDDDDME). Over residues 1088 to 1115 (EGEDDEYFEEDEEAVDDEPMTFDDDDME) the composition is skewed to acidic residues.

The protein belongs to the RNA polymerase beta chain family. As to quaternary structure, the RNAP catalytic core consists of 2 alpha, 1 beta, 1 beta' and 1 omega subunit. When a sigma factor is associated with the core the holoenzyme is formed, which can initiate transcription.

The enzyme catalyses RNA(n) + a ribonucleoside 5'-triphosphate = RNA(n+1) + diphosphate. DNA-dependent RNA polymerase catalyzes the transcription of DNA into RNA using the four ribonucleoside triphosphates as substrates. This chain is DNA-directed RNA polymerase subunit beta, found in Desulfitobacterium hafniense (strain Y51).